Here is a 496-residue protein sequence, read N- to C-terminus: Galactose-1-phosphate uridylyltransferase (496 aa).

Belongs to the galactose-1-phosphate uridylyltransferase type 2 family.

It localises to the cytoplasm. The enzyme catalyses alpha-D-galactose 1-phosphate + UDP-alpha-D-glucose = alpha-D-glucose 1-phosphate + UDP-alpha-D-galactose. It functions in the pathway carbohydrate metabolism; galactose metabolism. The polypeptide is Galactose-1-phosphate uridylyltransferase (Staphylococcus saprophyticus subsp. saprophyticus (strain ATCC 15305 / DSM 20229 / NCIMB 8711 / NCTC 7292 / S-41)).